The primary structure comprises 338 residues: Ketol-acid reductoisomerase (NADP(+)) (338 aa).

Positions 1–181 (MKVFYDKDAD…GGGRAGIIET (181 aa)) constitute a KARI N-terminal Rossmann domain. NADP(+) is bound by residues 24–27 (YGSQ), arginine 47, and serine 52. The active site involves histidine 107. Residue glycine 133 coordinates NADP(+). Residues 182–327 (NFREETETDL…AKLRAMMPWI (146 aa)) enclose the KARI C-terminal knotted domain. Aspartate 190, glutamate 194, glutamate 226, and glutamate 230 together coordinate Mg(2+). A substrate-binding site is contributed by serine 251.

This sequence belongs to the ketol-acid reductoisomerase family. Requires Mg(2+) as cofactor.

The catalysed reaction is (2R)-2,3-dihydroxy-3-methylbutanoate + NADP(+) = (2S)-2-acetolactate + NADPH + H(+). It catalyses the reaction (2R,3R)-2,3-dihydroxy-3-methylpentanoate + NADP(+) = (S)-2-ethyl-2-hydroxy-3-oxobutanoate + NADPH + H(+). Its pathway is amino-acid biosynthesis; L-isoleucine biosynthesis; L-isoleucine from 2-oxobutanoate: step 2/4. It participates in amino-acid biosynthesis; L-valine biosynthesis; L-valine from pyruvate: step 2/4. Functionally, involved in the biosynthesis of branched-chain amino acids (BCAA). Catalyzes an alkyl-migration followed by a ketol-acid reduction of (S)-2-acetolactate (S2AL) to yield (R)-2,3-dihydroxy-isovalerate. In the isomerase reaction, S2AL is rearranged via a Mg-dependent methyl migration to produce 3-hydroxy-3-methyl-2-ketobutyrate (HMKB). In the reductase reaction, this 2-ketoacid undergoes a metal-dependent reduction by NADPH to yield (R)-2,3-dihydroxy-isovalerate. In Polynucleobacter asymbioticus (strain DSM 18221 / CIP 109841 / QLW-P1DMWA-1) (Polynucleobacter necessarius subsp. asymbioticus), this protein is Ketol-acid reductoisomerase (NADP(+)).